The chain runs to 62 residues: Large ribosomal subunit protein uL29 (62 aa).

It belongs to the universal ribosomal protein uL29 family.

The sequence is that of Large ribosomal subunit protein uL29 from Enterococcus faecalis (strain ATCC 700802 / V583).